A 356-amino-acid polypeptide reads, in one-letter code: Glutamine synthetase (356 aa).

The GS beta-grasp domain maps to 19 to 99 (IIAEYIWIGG…VMCDCYTPRG (81 aa)). Positions 106-356 (KRYNAAKILS…IAQTTILWKP (251 aa)) constitute a GS catalytic domain.

Belongs to the glutamine synthetase family. In terms of assembly, homooctamer.

The protein localises to the cytoplasm. The enzyme catalyses L-glutamate + NH4(+) + ATP = L-glutamine + ADP + phosphate + H(+). The chain is Glutamine synthetase from Hordeum vulgare (Barley).